Reading from the N-terminus, the 1841-residue chain is Sucrase-isomaltase, intestinal (1841 aa).

At 1–12 (MAKKKFSALEIS) the chain is on the cytoplasmic side. Phosphoserine; by PKA is present on S7. Residues 13–32 (LIVLFIIVTAIAIALVTVLA) form a helical; Signal-anchor for type II membrane protein membrane-spanning segment. Residues 33-1841 (TKVPAVEEIK…LDEPIQITWS (1809 aa)) lie on the Lumenal side of the membrane. Positions 42 to 81 (KSPTPTSNSTPTSTPTSTSTPTSTSTPSPGKCPPEQGEPI) are disordered. Residues 43-70 (SPTPTSNSTPTSTPTSTSTPTSTSTPSP) are compositionally biased toward low complexity. The P-type 1 domain maps to 71–120 (GKCPPEQGEPINERINCIPEQHPTKAICEERGCCWRPWNNTVIPWCFFAD). Cystine bridges form between C73-C104, C87-C103, and C98-C116. N109 carries N-linked (GlcNAc...) asparagine glycosylation. An isomaltase region spans residues 120–1013 (DNHGYNAESI…ELQLNPPNAR (894 aa)). Substrate is bound by residues D274 and D398. Y401 and Y410 each carry sulfotyrosine. N464 is a glycosylation site (N-linked (GlcNAc...) asparagine). The active-site Nucleophile; for isomaltase activity is the D514. R599 provides a ligand contact to substrate. D615 acts as the For isomaltase activity in catalysis. C646 and C657 are oxidised to a cystine. H673 lines the substrate pocket. Residues N758, N765, N867, and N910 are each glycosylated (N-linked (GlcNAc...) asparagine). One can recognise a P-type 2 domain in the interval 936–984 (RWCRTFSDNEKFTCYPDVGTATEGTCTQRGCLWQPVSGLSNVPPYYFPP). The sucrase stretch occupies residues 1014-1841 (IKLPSNPIST…LDEPIQITWS (828 aa)). N-linked (GlcNAc...) asparagine glycosylation is found at N1240, N1308, N1345, N1359, and N1373. Y1387 carries the sulfotyrosine modification. D1399 (nucleophile; for sucrase activity) is an active-site residue. E1402 functions as the For sucrase activity in the catalytic mechanism. N1485 carries an N-linked (GlcNAc...) asparagine glycan. D1512 functions as the Proton donor; for sucrase activity in the catalytic mechanism. N-linked (GlcNAc...) asparagine glycosylation is found at N1513, N1575, N1762, and N1829.

This sequence belongs to the glycosyl hydrolase 31 family. In terms of assembly, the resulting sucrase and isomaltase subunits stay associated with one another in a complex by non-covalent linkages. Post-translationally, the precursor is proteolytically cleaved when exposed to pancreatic proteases in the intestinal lumen. Sulfated.

It localises to the apical cell membrane. The catalysed reaction is Hydrolysis of sucrose and maltose by an alpha-D-glucosidase-type action.. It catalyses the reaction Hydrolysis of (1-&gt;6)-alpha-D-glucosidic linkages in some oligosaccharides produced from starch and glycogen by alpha-amylase, and in isomaltose.. Plays an important role in the final stage of carbohydrate digestion. Isomaltase activity is specific for both alpha-1,4- and alpha-1,6-oligosaccharides. The polypeptide is Sucrase-isomaltase, intestinal (Si) (Rattus norvegicus (Rat)).